Reading from the N-terminus, the 963-residue chain is Iron-responsive element-binding protein 2 (963 aa).

Residues C512, C578, and C581 each contribute to the [4Fe-4S] cluster site.

It belongs to the aconitase/IPM isomerase family. Interacts with RBCK1 only in iron-rich conditions. Interacts (when associated with the 4Fe-4S) with FBXL5. Interacts with CIAO1 and CIAO2A. [4Fe-4S] cluster is required as a cofactor. Ubiquitinated and degraded by the proteasome in presence of high level of iron and oxygen. Ubiquitinated by a SCF complex containing FBXL5. Upon iron and oxygen depletion FBXL5 is degraded, preventing ubiquitination and allowing its RNA-binding activity.

The protein localises to the cytoplasm. In terms of biological role, RNA-binding protein that binds to iron-responsive elements (IRES), which are stem-loop structures found in the 5'-UTR of ferritin, and delta aminolevulinic acid synthase mRNAs, and in the 3'-UTR of transferrin receptor mRNA. Binding to the IRE element in ferritin results in the repression of its mRNA translation. Binding of the protein to the transferrin receptor mRNA inhibits the degradation of this otherwise rapidly degraded mRNA. The protein is Iron-responsive element-binding protein 2 (Ireb2) of Mus musculus (Mouse).